The primary structure comprises 586 residues: Arginine--tRNA ligase (586 aa).

The short motif at 131–141 (ANPTGPMHVGH) is the 'HIGH' region element.

The protein belongs to the class-I aminoacyl-tRNA synthetase family. As to quaternary structure, monomer.

The protein resides in the cytoplasm. The catalysed reaction is tRNA(Arg) + L-arginine + ATP = L-arginyl-tRNA(Arg) + AMP + diphosphate. The chain is Arginine--tRNA ligase from Xanthobacter autotrophicus (strain ATCC BAA-1158 / Py2).